The following is a 123-amino-acid chain: Large ribosomal subunit protein uL29 (123 aa).

This sequence belongs to the universal ribosomal protein uL29 family. In terms of assembly, component of the large ribosomal subunit.

It is found in the cytoplasm. Its function is as follows. Component of the large ribosomal subunit. The ribosome is a large ribonucleoprotein complex responsible for the synthesis of proteins in the cell. Plays an essential role in early embryonic development. May act as a haploinsufficient tumor suppressor. This is Large ribosomal subunit protein uL29 (rpl35) from Danio rerio (Zebrafish).